The following is a 482-amino-acid chain: MSPTTAANQAKKLIKVPEMRRIKHIHFVGIGGAGMCGIAEVLANQGYKISGSDIKASKTTQQLEENGIKVYIGHEAENIKNANVLVVSTAIDPENPEVKAAIEQRIPIVRRAEMLGELMRYRHGIAVAGTHGKTTTTSLLTTMLAEENLDPTYVIGGLLNSTGVNAALGESRFIVAEADESDASFLYLQPMAAIVTNIDADHMDTYEGSFDKLKDTFVQFLHNLPFYGLAVVCGDDANIREILPRVGRPVITYGFNEDNDIRAIDVEQDGMRSHFTVLRKGREPLRLTINQPGLHNVLNALAAIGVATDEGVSDEAISRALKGFSGVGRRFQVQGEFELGEGNVKLVDDYGHHPKEVEATIKAARQSHPDRRLVMLFQPHRYSRTRDCFDDFIEVLSQVDQLLLLEVYPAGEKPIVGADSRTLARSIRLRGQVEPILIDPVEGNLQNIMQNVLQPNDLLLTQGAGNVGAISVELAQHHLYVK.

129–135 (GTHGKTT) is a binding site for ATP.

It belongs to the MurCDEF family.

It is found in the cytoplasm. The catalysed reaction is UDP-N-acetyl-alpha-D-muramate + L-alanine + ATP = UDP-N-acetyl-alpha-D-muramoyl-L-alanine + ADP + phosphate + H(+). It participates in cell wall biogenesis; peptidoglycan biosynthesis. Functionally, cell wall formation. In Acinetobacter baumannii (strain AB307-0294), this protein is UDP-N-acetylmuramate--L-alanine ligase.